Reading from the N-terminus, the 825-residue chain is Cytosolic phospholipase A2 delta (825 aa).

The region spanning 14–133 (SPERLHGHPY…LPGQLLQKTF (120 aa)) is the C2 domain. The Ca(2+) site is built by Asp47, Asp53, Asp103, Asp105, and Asp111. The region spanning 281-825 (DCCPKELSVR…SETRPLGVKT (545 aa)) is the PLA2c domain. 339 to 340 (GG) is a binding site for substrate. Catalysis depends on Ser370, which acts as the Nucleophile. The Proton acceptor role is filled by Asp654.

The cofactor is Ca(2+). In terms of tissue distribution, weakly or not expressed in most tissues. Detected in placenta of 17.5 dpc embryos.

The protein resides in the cytoplasm. It localises to the cytosol. It is found in the membrane. The enzyme catalyses a 1,2-diacyl-sn-glycero-3-phosphocholine + H2O = a 1-acyl-sn-glycero-3-phosphocholine + a fatty acid + H(+). It catalyses the reaction 1-hexadecanoyl-2-(5Z,8Z,11Z,14Z-eicosatetraenoyl)-sn-glycero-3-phosphocholine + H2O = 1-hexadecanoyl-sn-glycero-3-phosphocholine + (5Z,8Z,11Z,14Z)-eicosatetraenoate + H(+). The catalysed reaction is 1-hexadecanoyl-2-(9Z,12Z-octadecadienoyl)-sn-glycero-3-phosphocholine + H2O = (9Z,12Z)-octadecadienoate + 1-hexadecanoyl-sn-glycero-3-phosphocholine + H(+). It carries out the reaction 1-hexadecanoyl-2-(9Z-octadecenoyl)-sn-glycero-3-phosphocholine + H2O = 1-hexadecanoyl-sn-glycero-3-phosphocholine + (9Z)-octadecenoate + H(+). The enzyme catalyses 1-hexadecanoyl-2-(5Z,8Z,11Z,14Z-eicosatetraenoyl)-sn-glycero-3-phosphoethanolamine + H2O = 1-hexadecanoyl-sn-glycero-3-phosphoethanolamine + (5Z,8Z,11Z,14Z)-eicosatetraenoate + H(+). It catalyses the reaction 1-hexadecanoyl-2-(9Z,12Z-octadecadienoyl)-sn-glycero-3-phosphoethanolamine + H2O = 1-hexadecanoyl-sn-glycero-3-phosphoethanolamine + (9Z,12Z)-octadecadienoate + H(+). The catalysed reaction is 1-hexadecanoyl-sn-glycero-3-phosphocholine + H2O = sn-glycerol 3-phosphocholine + hexadecanoate + H(+). The protein operates within lipid metabolism; fatty acid metabolism. Its activity is regulated as follows. Stimulated by cytosolic Ca(2+). Functionally, calcium-dependent phospholipase A2 that selectively hydrolyzes glycerophospholipids in the sn-2 position. Compared to its human ortholog, may have no preference for the fatty acid found at the sn-2 position. In Mus musculus (Mouse), this protein is Cytosolic phospholipase A2 delta.